A 422-amino-acid polypeptide reads, in one-letter code: Large ribosomal subunit protein uL4 (422 aa).

Ala-2 bears the N-acetylalanine mark. At Lys-14 the chain carries N6-acetyllysine. Arg-97 is modified (omega-N-methylarginine). Residue Lys-106 is modified to N6-acetyllysine. A Glycyl lysine isopeptide (Lys-Gly) (interchain with G-Cter in SUMO2) cross-link involves residue Lys-239. Residue Lys-259 is modified to N6-acetyllysine. Thr-266 carries the post-translational modification Phosphothreonine. Phosphoserine is present on residues Ser-290 and Ser-295. Arg-300 is modified (citrulline). Lys-327 participates in a covalent cross-link: Glycyl lysine isopeptide (Lys-Gly) (interchain with G-Cter in SUMO2). N6-acetyllysine occurs at positions 333 and 353. The segment at 359-422 (EAKSDQKGVQ…PTSEEKKAAA (64 aa)) is disordered. Residue Lys-361 is modified to N6-acetyllysine; alternate. Lys-361 is covalently cross-linked (Glycyl lysine isopeptide (Lys-Gly) (interchain with G-Cter in SUMO1); alternate). Phosphoserine is present on Ser-362. Composition is skewed to basic and acidic residues over residues 376 to 385 (NKEKKAVGDK) and 402 to 422 (PAAE…KAAA).

It belongs to the universal ribosomal protein uL4 family. In terms of assembly, component of the large ribosomal subunit. May bind IPO9 with low affinity. Interacts with RBM3. Post-translationally, citrullinated by PADI4.

Its subcellular location is the cytoplasm. Functionally, component of the large ribosomal subunit. The ribosome is a large ribonucleoprotein complex responsible for the synthesis of proteins in the cell. This is Large ribosomal subunit protein uL4 (RPL4) from Bos taurus (Bovine).